We begin with the raw amino-acid sequence, 252 residues long: 5-oxoprolinase subunit A (252 aa).

Belongs to the LamB/PxpA family. Forms a complex composed of PxpA, PxpB and PxpC.

The enzyme catalyses 5-oxo-L-proline + ATP + 2 H2O = L-glutamate + ADP + phosphate + H(+). In terms of biological role, catalyzes the cleavage of 5-oxoproline to form L-glutamate coupled to the hydrolysis of ATP to ADP and inorganic phosphate. The polypeptide is 5-oxoprolinase subunit A (Mycolicibacterium paratuberculosis (strain ATCC BAA-968 / K-10) (Mycobacterium paratuberculosis)).